Consider the following 293-residue polypeptide: Probable porphobilinogen deaminase (293 aa).

At Cys-233 the chain carries S-(dipyrrolylmethanemethyl)cysteine.

This sequence belongs to the HMBS family. Requires dipyrromethane as cofactor.

The enzyme catalyses 4 porphobilinogen + H2O = hydroxymethylbilane + 4 NH4(+). Its pathway is porphyrin-containing compound metabolism; protoporphyrin-IX biosynthesis; coproporphyrinogen-III from 5-aminolevulinate: step 2/4. Functionally, tetrapolymerization of the monopyrrole PBG into the hydroxymethylbilane pre-uroporphyrinogen in several discrete steps. The chain is Probable porphobilinogen deaminase from Saccharolobus islandicus (strain Y.G.57.14 / Yellowstone #1) (Sulfolobus islandicus).